The following is a 194-amino-acid chain: Adenylate kinase isoenzyme 1 (194 aa).

M1 carries the N-acetylmethionine modification. 18–23 (GSGKGT) serves as a coordination point for ATP. S38 carries the post-translational modification Phosphoserine. The segment at 38 to 67 (STGDLLRAEVSSGSARGKMLSEIMEKGQLV) is NMP. AMP is bound by residues T39, R44, 65 to 67 (QLV), 94 to 97 (GYPR), and Q101. Residues 131–141 (KRGETSGRVDD) form an LID region. Residue R132 coordinates ATP. Residues R138 and R149 each contribute to the AMP site. G177 is an ATP binding site.

The protein belongs to the adenylate kinase family. AK1 subfamily. As to quaternary structure, monomer. Requires Mg(2+) as cofactor.

Its subcellular location is the cytoplasm. The enzyme catalyses a ribonucleoside 5'-phosphate + ATP = a ribonucleoside 5'-diphosphate + ADP. It carries out the reaction AMP + ATP = 2 ADP. It catalyses the reaction dAMP + ATP = dADP + ADP. The catalysed reaction is dATP + AMP = dADP + ADP. The enzyme catalyses dAMP + dATP = 2 dADP. It carries out the reaction a 2'-deoxyribonucleoside 5'-diphosphate + ATP = a 2'-deoxyribonucleoside 5'-triphosphate + ADP. It catalyses the reaction a ribonucleoside 5'-diphosphate + ATP = a ribonucleoside 5'-triphosphate + ADP. The catalysed reaction is CDP + GTP = CTP + GDP. The enzyme catalyses GDP + ATP = GTP + ADP. It carries out the reaction UDP + ATP = UTP + ADP. It catalyses the reaction GTP + UDP = UTP + GDP. The catalysed reaction is dTDP + GTP = dTTP + GDP. The enzyme catalyses dCDP + GTP = dCTP + GDP. It carries out the reaction dGDP + ATP = dGTP + ADP. It catalyses the reaction dADP + GTP = dATP + GDP. The catalysed reaction is thiamine diphosphate + ADP = thiamine triphosphate + AMP. Functionally, catalyzes the reversible transfer of the terminal phosphate group between ATP and AMP. Also displays broad nucleoside diphosphate kinase activity. Plays an important role in cellular energy homeostasis and in adenine nucleotide metabolism. Also catalyzes at a very low rate the synthesis of thiamine triphosphate (ThTP) from thiamine diphosphate (ThDP) and ADP. The chain is Adenylate kinase isoenzyme 1 from Sus scrofa (Pig).